Reading from the N-terminus, the 489-residue chain is Bypass of stop codon protein 5 (489 aa).

The segment at 1–42 (MQESKEPQNKFEGCQRISSSSSTLFGGTSFEEPRCGTSQGKE) is disordered. Over residues 18-30 (SSSSSTLFGGTSF) the composition is skewed to low complexity. Phosphoserine is present on residues serine 111 and serine 350.

This sequence belongs to the BUL1 family.

Its function is as follows. Appears to play a role in translation fidelity, and may act when translation is compromised. May be a component of the ubiquitination pathway. In Saccharomyces cerevisiae (strain ATCC 204508 / S288c) (Baker's yeast), this protein is Bypass of stop codon protein 5 (BSC5).